The primary structure comprises 680 residues: tRNA 5-methylaminomethyl-2-thiouridine biosynthesis bifunctional protein MnmC (680 aa).

Positions 1–251 (MSQNHILPQN…KREMIAGTLT (251 aa)) are tRNA (mnm(5)s(2)U34)-methyltransferase. An FAD-dependent cmnm(5)s(2)U34 oxidoreductase region spans residues 277-680 (IGGGVASAAL…RLLKGKPLDI (404 aa)).

This sequence in the N-terminal section; belongs to the methyltransferase superfamily. tRNA (mnm(5)s(2)U34)-methyltransferase family. It in the C-terminal section; belongs to the DAO family. Requires FAD as cofactor.

Its subcellular location is the cytoplasm. The catalysed reaction is 5-aminomethyl-2-thiouridine(34) in tRNA + S-adenosyl-L-methionine = 5-methylaminomethyl-2-thiouridine(34) in tRNA + S-adenosyl-L-homocysteine + H(+). Its function is as follows. Catalyzes the last two steps in the biosynthesis of 5-methylaminomethyl-2-thiouridine (mnm(5)s(2)U) at the wobble position (U34) in tRNA. Catalyzes the FAD-dependent demodification of cmnm(5)s(2)U34 to nm(5)s(2)U34, followed by the transfer of a methyl group from S-adenosyl-L-methionine to nm(5)s(2)U34, to form mnm(5)s(2)U34. The sequence is that of tRNA 5-methylaminomethyl-2-thiouridine biosynthesis bifunctional protein MnmC from Aliivibrio fischeri (strain ATCC 700601 / ES114) (Vibrio fischeri).